Here is a 171-residue protein sequence, read N- to C-terminus: 3-hydroxydecanoyl-[acyl-carrier-protein] dehydratase (171 aa).

Histidine 71 is a catalytic residue.

The protein belongs to the thioester dehydratase family. FabA subfamily. Homodimer.

The protein localises to the cytoplasm. It catalyses the reaction a (3R)-hydroxyacyl-[ACP] = a (2E)-enoyl-[ACP] + H2O. It carries out the reaction (3R)-hydroxydecanoyl-[ACP] = (2E)-decenoyl-[ACP] + H2O. The enzyme catalyses (2E)-decenoyl-[ACP] = (3Z)-decenoyl-[ACP]. It functions in the pathway lipid metabolism; fatty acid biosynthesis. In terms of biological role, necessary for the introduction of cis unsaturation into fatty acids. Catalyzes the dehydration of (3R)-3-hydroxydecanoyl-ACP to E-(2)-decenoyl-ACP and then its isomerization to Z-(3)-decenoyl-ACP. Can catalyze the dehydratase reaction for beta-hydroxyacyl-ACPs with saturated chain lengths up to 16:0, being most active on intermediate chain length. In Rhizobium rhizogenes (strain K84 / ATCC BAA-868) (Agrobacterium radiobacter), this protein is 3-hydroxydecanoyl-[acyl-carrier-protein] dehydratase.